The primary structure comprises 60 residues: Large ribosomal subunit protein bL33 (60 aa).

It belongs to the bacterial ribosomal protein bL33 family.

This is Large ribosomal subunit protein bL33 from Chlorobium chlorochromatii (strain CaD3).